The following is a 422-amino-acid chain: MIKVYRYEIVKPLDLDWKEFGTILRQLQQETRFALNKATQLAWEWMGFSSDYKDNHGEYPKSKDILGYTNVHGYAYHTIKTKAYRLNSGNLSQTIKRATDRFKAYQKEILRGDMSIPSYKRDIPLDLIKENISVNRMNHGDYIASLSLLSNPAKQEMNVKRKISVIIIVRGAGKTIMDRILSGEYQVSASQIIHDDRKNKWYLNISYDFEPQTRVLDLNKIMGIDLGVAVAVYMAFQHTPARYKLEGGEIENFRRQVESRRISMLRQGKYAGGARGGHGRDKRIKPIEQLRDKIANFRDTTNHRYSRYIVDMAIKEGCGTIQMEDLTNIRDIGSRFLQNWTYYDLQQKIIYKAEEAGIKVIKIDPQYTSQRCSECGNIDSGNRIGQAIFKCRACGYEANADYNAARNIAIPNIDKIIAESIK.

Positions 1 to 126 (MIKVYRYEIV…PSYKRDIPLD (126 aa)) are recognition domain (REC). Residues 127 to 211 (LIKENISVNR…YLNISYDFEP (85 aa)) are wedge domain (WED). The segment at 212–220 (QTRVLDLNK) is linker. The interval 221-370 (IMGIDLGVAV…IKIDPQYTSQ (150 aa)) is ruvC-I. Catalysis depends on residues Asp-225 and Glu-324. The target nucleic acid-binding (TNB) stretch occupies residues 371–399 (RCSECGNIDSGNRIGQAIFKCRACGYEAN). The Zn(2+) site is built by Cys-372, Cys-375, Cys-391, and Cys-394. Residues 400–420 (ADYNAARNIAIPNIDKIIAES) are ruvC-II. Asp-401 is a catalytic residue.

Belongs to the CRISPR-associated endonuclease Cas12f family. In terms of assembly, an asymmetric homodimer. Guide RNA is probably required for dimerization. The cofactor is Mg(2+). Zn(2+) is required as a cofactor.

Functionally, CRISPR (clustered regularly interspaced short palindromic repeat), is an adaptive immune system that provides protection against mobile genetic elements (viruses, transposable elements and conjugative plasmids). CRISPR clusters contain sequences complementary to antecedent mobile elements and target invading nucleic acids. CRISPR clusters are transcribed and processed into CRISPR RNA (crRNA), which requires a trans-encoded small RNA (tracrRNA), but not this protein. Recognizes a short motif in the CRISPR repeat sequences (the 5' PAM or protospacer adjacent motif, YTT in this organism) to help distinguish self versus nonself, as targets within the CRISPR locus do not have PAMs. Has dsDNA endonuclease activity upon expression in E.coli of this protein, a mini CRISPR array and the probable tracrRNA. Plasmid cleavage is centered around positions 19-24 base pairs 3' of PAM. The mini system protects E.coli against transformation by foreign plasmids. This is CRISPR-associated endodeoxyribonuclease Cas12f1 from Sulfoacidibacillus thermotolerans (Acidibacillus sulfuroxidans).